The sequence spans 177 residues: Chorismate pyruvate-lyase (177 aa).

Substrate-binding residues include Met-36, Arg-78, Leu-116, and Glu-157.

The protein belongs to the UbiC family. In terms of assembly, monomer.

It is found in the cytoplasm. It catalyses the reaction chorismate = 4-hydroxybenzoate + pyruvate. Its pathway is cofactor biosynthesis; ubiquinone biosynthesis. Its function is as follows. Removes the pyruvyl group from chorismate, with concomitant aromatization of the ring, to provide 4-hydroxybenzoate (4HB) for the ubiquinone pathway. This is Chorismate pyruvate-lyase from Pectobacterium carotovorum subsp. carotovorum (strain PC1).